Here is a 215-residue protein sequence, read N- to C-terminus: High mobility group protein B1 (215 aa).

1 to 10 contributes to the heparin binding site; it reads MGKGDPKKPR. The tract at residues 1–97 is sufficient for interaction with HAVCR2; that stretch reads MGKGDPKKPR…KFKDPNAPKR (97 aa). An N6-acetyllysine mark is found at Lys-3, Lys-7, Lys-8, and Lys-12. Residues 3–15 form an LPS binding (delipidated) region; that stretch reads KGDPKKPRGKMSS. Residues 9-79 constitute a DNA-binding region (HMG box 1); that stretch reads PRGKMSSYAF…RYEREMKTYI (71 aa). The residue at position 23 (Cys-23) is a Cysteine sulfonic acid (-SO3H); alternate. Cysteines 23 and 45 form a disulfide. The Nuclear localization signal (NLS) 1 signature appears at 27 to 43; sequence HKKKHPDASVNFSEFSK. N6-acetyllysine occurs at positions 28, 29, and 30. Lys-28 is covalently cross-linked (Isoglutamyl lysine isopeptide (Lys-Gln) (interchain with Q-?)). Ser-35 bears the Phosphoserine mark. Lys-43 carries the N6-acetyllysine modification. Residues Lys-43 and Lys-44 each participate in an isoglutamyl lysine isopeptide (Lys-Gln) (interchain with Q-?) cross-link. Cys-45 carries the post-translational modification Cysteine sulfonic acid (-SO3H); alternate. The residue at position 51 (Thr-51) is a Phosphothreonine. An Isoglutamyl lysine isopeptide (Lys-Gln) (interchain with Q-?) cross-link involves residue Lys-68. Residues 76-95 form a disordered region; sequence KTYIPPKGETKKKFKDPNAP. The segment at 80-96 is LPS binding (Lipid A); the sequence is PPKGETKKKFKDPNAPK. A compositionally biased stretch (basic and acidic residues) spans 83–94; sequence GETKKKFKDPNA. The segment at 89-108 is cytokine-stimulating activity; sequence FKDPNAPKRPPSAFFLFCSE. Lys-90 is modified (N6-acetyllysine). The segment at residues 95–163 is a DNA-binding region (HMG box 2); the sequence is PKRPPSAFFL…KYEKDIAAYR (69 aa). Residue Ser-100 is modified to Phosphoserine. Residue Cys-106 is modified to Cysteine sulfonic acid (-SO3H). N6-acetyllysine occurs at positions 127, 128, 141, 172, 173, 177, and 180. Residues 150–183 are binding to AGER/RAGE; sequence KLKEKYEKDIAAYRAKGKPDAAKKGVVKAEKSKK. Residues 162-179 are compositionally biased toward basic and acidic residues; that stretch reads YRAKGKPDAAKKGVVKAE. Residues 162-215 are disordered; sequence YRAKGKPDAAKKGVVKAEKSKKKKEEEEDEEDEEDEEEEEDEEDEEEEEDDDDE. The Nuclear localization signal (NLS) 2 signature appears at 178-184; that stretch reads AEKSKKK. Residue Lys-180 forms an Isoglutamyl lysine isopeptide (Lys-Gln) (interchain with Q-?) linkage. Ser-181 is subject to ADP-ribosylserine. N6-acetyllysine is present on residues Lys-182, Lys-183, Lys-184, and Lys-185. Isoglutamyl lysine isopeptide (Lys-Gln) (interchain with Q-?) cross-links involve residues Lys-182, Lys-183, and Lys-184. Residues 187 to 215 are compositionally biased toward acidic residues; that stretch reads EEEDEEDEEDEEEEEDEEDEEEEEDDDDE.

The protein belongs to the HMGB family. As to quaternary structure, interacts (fully reduced HMGB1) with CXCL12; probably in a 1:2 ratio involving two molecules of CXCL12, each interacting with one HMG box of HMGB1; inhibited by glycyrrhizin. Associates with the TLR4:LY96 receptor complex. Component of the RAG complex composed of core components RAG1 and RAG2, and associated component HMGB1 or HMGB2. Interacts (in cytoplasm upon starvation) with BECN1; inhibits the interaction of BECN1 and BCL2 leading to promotion of autophagy. Interacts with KPNA1; involved in nuclear import. Interacts with SREBF1, TLR2, TLR4, TLR9, PTPRZ1, APEX1, FEN1, POLB, TERT. Interacts with IL1B, AGER, MSH2, XPA, XPC, HNF1A, TP53. Interacts with CD24; the probable CD24:SIGLEC10 complex is proposed to inhibit HGMB1-mediated tissue damage immune response. Interacts with THBD; prevents HGMB1 interaction with ACER/RAGE and inhibits HGMB1 pro-inflammatory activity. Interacts with HAVCR2; impairs HMGB1 binding to B-DNA and likely HMGB1-mediated innate immune response. Interacts with XPO1; mediating nuclear export. Interacts with receptor RAGE/AGER. In terms of processing, phosphorylated at serine residues. Phosphorylation in both NLS regions is required for cytoplasmic translocation followed by secretion. Phosphorylation at Thr-51 within the NLS is crucial for secretion induced by porcine reproductive and respiratory syndrome virus (PRRSV). Acetylated on multiple sites upon stimulation with LPS. Acetylation on lysine residues in the nuclear localization signals (NLS 1 and NLS 2) leads to cytoplasmic localization and subsequent secretion. Acetylation on Lys-3 results in preferential binding to DNA ends and impairs DNA bending activity. Post-translationally, reduction/oxidation of cysteine residues Cys-23, Cys-45 and Cys-106 and a possible intramolecular disulfide bond involving Cys-23 and Cys-45 give rise to different redox forms with specific functional activities in various cellular compartments: 1- fully reduced HMGB1 (HMGB1C23hC45hC106h), 2- disulfide HMGB1 (HMGB1C23-C45C106h) and 3- sulfonyl HMGB1 (HMGB1C23soC45soC106so). In terms of processing, poly-ADP-ribosylated by PARP1 when secreted following stimulation with LPS. In vitro cleavage by CASP1 is liberating a HMG box 1-containing peptide which may mediate immunogenic activity; the peptide antagonizes apoptosis-induced immune tolerance. Can be proteolytically cleaved by a thrombin:thrombomodulin complex; reduces binding to heparin and pro-inflammatory activities. Post-translationally, forms covalent cross-links mediated by transglutaminase TGM2, between a glutamine and the epsilon-amino group of a lysine residue, forming homopolymers and heteropolymers.

The protein localises to the nucleus. It localises to the chromosome. Its subcellular location is the cytoplasm. The protein resides in the secreted. It is found in the cell membrane. The protein localises to the endosome. It localises to the endoplasmic reticulum-Golgi intermediate compartment. Its function is as follows. Multifunctional redox sensitive protein with various roles in different cellular compartments. In the nucleus is one of the major chromatin-associated non-histone proteins and acts as a DNA chaperone involved in replication, transcription, chromatin remodeling, V(D)J recombination, DNA repair and genome stability. Proposed to be an universal biosensor for nucleic acids. Promotes host inflammatory response to sterile and infectious signals and is involved in the coordination and integration of innate and adaptive immune responses. In the cytoplasm functions as a sensor and/or chaperone for immunogenic nucleic acids implicating the activation of TLR9-mediated immune responses, and mediates autophagy. Acts as a danger-associated molecular pattern (DAMP) molecule that amplifies immune responses during tissue injury. Released to the extracellular environment can bind DNA, nucleosomes, IL-1 beta, CXCL12, AGER isoform 2/sRAGE, lipopolysaccharide (LPS) and lipoteichoic acid (LTA), and activates cells through engagement of multiple surface receptors. In the extracellular compartment fully reduced HMGB1 (released by necrosis) acts as a chemokine, disulfide HMGB1 (actively secreted) as a cytokine, and sulfonyl HMGB1 (released from apoptotic cells) promotes immunological tolerance. Has proangiogenic activity. May be involved in platelet activation. Binds to phosphatidylserine and phosphatidylethanolamide. Bound to RAGE mediates signaling for neuronal outgrowth. May play a role in accumulation of expanded polyglutamine (polyQ) proteins. Functionally, nuclear functions are attributed to fully reduced HGMB1. Associates with chromatin and binds DNA with a preference to non-canonical DNA structures such as single-stranded DNA, DNA-containing cruciforms or bent structures, supercoiled DNA and ZDNA. Can bent DNA and enhance DNA flexibility by looping thus providing a mechanism to promote activities on various gene promoters by enhancing transcription factor binding and/or bringing distant regulatory sequences into close proximity. May be involved in nucleotide excision repair (NER), mismatch repair (MMR) and base excision repair (BER) pathways, and double strand break repair such as non-homologous end joining (NHEJ). Involved in V(D)J recombination by acting as a cofactor of the RAG complex: acts by stimulating cleavage and RAG protein binding at the 23 bp spacer of conserved recombination signal sequences (RSS). In vitro can displace histone H1 from highly bent DNA. Can restructure the canonical nucleosome leading to relaxation of structural constraints for transcription factor-binding. Enhances binding of sterol regulatory element-binding proteins (SREBPs) such as SREBF1 to their cognate DNA sequences and increases their transcriptional activities. Facilitates binding of TP53 to DNA. May be involved in mitochondrial quality control and autophagy in a transcription-dependent fashion implicating HSPB1. Can modulate the activity of the telomerase complex and may be involved in telomere maintenance. Represses porcine circovirus type 2 replication within the nucleus by binding to the Ori region of the viral genome. In the cytoplasm proposed to dissociate the BECN1:BCL2 complex via competitive interaction with BECN1 leading to autophagy activation. Can protect BECN1 and ATG5 from calpain-mediated cleavage and thus proposed to control their proautophagic and proapoptotic functions and to regulate the extent and severity of inflammation-associated cellular injury. In myeloid cells has a protective role against endotoxemia and bacterial infection by promoting autophagy. Involved in endosomal translocation and activation of TLR9 in response to CpG-DNA in macrophages. In terms of biological role, in the extracellular compartment (following either active secretion or passive release) involved in regulation of the inflammatory response. Fully reduced HGMB1 (which subsequently gets oxidized after release) in association with CXCL12 mediates the recruitment of inflammatory cells during the initial phase of tissue injury; the CXCL12:HMGB1 complex triggers CXCR4 homodimerization. Induces the migration of monocyte-derived immature dendritic cells and seems to regulate adhesive and migratory functions of neutrophils implicating AGER/RAGE and ITGAM. Can bind to various types of DNA and RNA including microbial unmethylated CpG-DNA to enhance the innate immune response to nucleic acids. Proposed to act in promiscuous DNA/RNA sensing which cooperates with subsequent discriminative sensing by specific pattern recognition receptors. Promotes extracellular DNA-induced AIM2 inflammasome activation implicating AGER/RAGE. Disulfide HMGB1 binds to transmembrane receptors, such as AGER/RAGE, TLR2, TLR4 and probably TREM1, thus activating their signal transduction pathways. Mediates the release of cytokines/chemokines such as TNF, IL-1, IL-6, IL-8, CCL2, CCL3, CCL4 and CXCL10. Promotes secretion of interferon-gamma by macrophage-stimulated natural killer (NK) cells in concert with other cytokines like IL-2 or IL-12. TLR4 is proposed to be the primary receptor promoting macrophage activation and signaling through TLR4 seems to implicate LY96/MD-2. In bacterial LPS- or LTA-mediated inflammatory responses binds to the endotoxins and transfers them to CD14 for signaling to the respective TLR4:LY96 and TLR2 complexes. Contributes to tumor proliferation by association with ACER/RAGE. Can bind to IL1-beta and signals through the IL1R1:IL1RAP receptor complex. Binding to class A CpG activates cytokine production in plasmacytoid dendritic cells implicating TLR9, MYD88 and AGER/RAGE and can activate autoreactive B cells. Via HMGB1-containing chromatin immune complexes may also promote B cell responses to endogenous TLR9 ligands through a B-cell receptor (BCR)-dependent and ACER/RAGE-independent mechanism. Inhibits phagocytosis of apoptotic cells by macrophages; the function is dependent on poly-ADP-ribosylation and involves binding to phosphatidylserine on the cell surface of apoptotic cells. In adaptive immunity may be involved in enhancing immunity through activation of effector T cells and suppression of regulatory T (TReg) cells. In contrast, without implicating effector or regulatory T-cells, required for tumor infiltration and activation of T-cells expressing the lymphotoxin LTA:LTB heterotrimer thus promoting tumor malignant progression. Also reported to limit proliferation of T-cells. Released HMGB1:nucleosome complexes formed during apoptosis can signal through TLR2 to induce cytokine production. Involved in induction of immunological tolerance by apoptotic cells; its pro-inflammatory activities when released by apoptotic cells are neutralized by reactive oxygen species (ROS)-dependent oxidation specifically on Cys-106. During macrophage activation by activated lymphocyte-derived self apoptotic DNA (ALD-DNA) promotes recruitment of ALD-DNA to endosomes. This chain is High mobility group protein B1 (HMGB1), found in Sus scrofa (Pig).